The sequence spans 207 residues: 3-hexulose-6-phosphate synthase (207 aa).

It belongs to the HPS/KGPDC family. HPS subfamily.

It carries out the reaction D-ribulose 5-phosphate + formaldehyde = D-arabino-hex-3-ulose 6-phosphate. The protein operates within one-carbon metabolism; formaldehyde assimilation via RuMP pathway; D-fructose 6-phosphate from D-ribulose 5-phosphate and formaldehyde: step 1/2. In terms of biological role, catalyzes the condensation of ribulose 5-phosphate with formaldehyde to form 3-hexulose 6-phosphate. The protein is 3-hexulose-6-phosphate synthase (rmpA) of Mycobacterium gastri.